Reading from the N-terminus, the 319-residue chain is Acetyl-coenzyme A carboxylase carboxyl transferase subunit alpha (319 aa).

In terms of domain architecture, CoA carboxyltransferase C-terminal spans Asn35–Glu296.

The protein belongs to the AccA family. As to quaternary structure, acetyl-CoA carboxylase is a heterohexamer composed of biotin carboxyl carrier protein (AccB), biotin carboxylase (AccC) and two subunits each of ACCase subunit alpha (AccA) and ACCase subunit beta (AccD).

The protein resides in the cytoplasm. It catalyses the reaction N(6)-carboxybiotinyl-L-lysyl-[protein] + acetyl-CoA = N(6)-biotinyl-L-lysyl-[protein] + malonyl-CoA. Its pathway is lipid metabolism; malonyl-CoA biosynthesis; malonyl-CoA from acetyl-CoA: step 1/1. In terms of biological role, component of the acetyl coenzyme A carboxylase (ACC) complex. First, biotin carboxylase catalyzes the carboxylation of biotin on its carrier protein (BCCP) and then the CO(2) group is transferred by the carboxyltransferase to acetyl-CoA to form malonyl-CoA. The sequence is that of Acetyl-coenzyme A carboxylase carboxyl transferase subunit alpha from Sodalis glossinidius (strain morsitans).